The following is a 193-amino-acid chain: MNFLAHLHLAHLADSSLPGNLMADFVRGNPQGDYPAEIIDGIYMHRRIDVMTDNLAEVKEAREWFRPQTRRVAPITLDVMWDHFLSQHWAQLSPDLPLDEFVRYAERQIVPILPDSPPRFVNLNQYLWSERWLERYREMDFIQRVLNGMASRRPRLEALRDSWQDLDTHYDRLETQFWRFYPQMMRLAENKQL.

This sequence belongs to the AcpH family.

It carries out the reaction holo-[ACP] + H2O = apo-[ACP] + (R)-4'-phosphopantetheine + H(+). Functionally, converts holo-ACP to apo-ACP by hydrolytic cleavage of the phosphopantetheine prosthetic group from ACP. This Klebsiella pneumoniae subsp. pneumoniae (strain ATCC 700721 / MGH 78578) protein is Acyl carrier protein phosphodiesterase.